Here is a 933-residue protein sequence, read N- to C-terminus: DNA replication licensing factor MCM4 (933 aa).

2 disordered regions span residues 1-149 (MSQQ…PRRI) and 154-173 (TRSG…PSEA). Positions 27–42 (PPQLSSPALFYSSSSS) are enriched in low complexity. Polar residues-rich tracts occupy residues 49 to 59 (RNNSQNLSQGE) and 69 to 85 (SPLN…SDVF). Ser-52, Ser-56, and Ser-69 each carry phosphoserine. A compositionally biased stretch (low complexity) spans 86-103 (QSQGRQGRIRSSASASGR). Over residues 117-129 (PTSSSSLGRNGQN) the composition is skewed to polar residues. The span at 164-173 (SSSSAPPSEA) shows a compositional bias: low complexity. The 208-residue stretch at 518-725 (LYSLLARSIA…NDRELAKHLT (208 aa)) folds into the MCM domain. 568–575 (GDPSTSKS) provides a ligand contact to ATP. The Arginine finger motif lies at 700–703 (SRFD).

The protein belongs to the MCM family. Component of the MCM2-7 complex. The complex forms a toroidal hexameric ring with the proposed subunit order MCM2-MCM6-MCM4-MCM7-MCM3-MCM5; loaded onto DNA, forms a head-head double hexamer.

It is found in the nucleus. The enzyme catalyses ATP + H2O = ADP + phosphate + H(+). Its function is as follows. Acts as a component of the MCM2-7 complex (MCM complex) which is the putative replicative helicase essential for 'once per cell cycle' DNA replication initiation and elongation in eukaryotic cells. The active ATPase sites in the MCM2-7 ring are formed through the interaction surfaces of two neighboring subunits such that a critical structure of a conserved arginine finger motif is provided in trans relative to the ATP-binding site of the Walker A box of the adjacent subunit. The six ATPase active sites, however, are likely to contribute differentially to the complex helicase activity. Once loaded onto DNA, double hexamers can slide on dsDNA in the absence of ATPase activity. Required for S phase execution. This is DNA replication licensing factor MCM4 (MCM4) from Saccharomyces cerevisiae (strain ATCC 204508 / S288c) (Baker's yeast).